Here is a 144-residue protein sequence, read N- to C-terminus: MKTFSPKPEHISHQWFLVDAHNKILGRLAAQIAHRLRGKHKPEFAPHIDNGDYIVVVNCEQIKVTGNKQEQKKYYRHSGYVGGLKETTLKTLLEKKPAEVLIHAVRGMLPKNRLGRAMLKKLKVYAGPEHQHIAQQPIPLSLPY.

It belongs to the universal ribosomal protein uL13 family. Part of the 50S ribosomal subunit.

Its function is as follows. This protein is one of the early assembly proteins of the 50S ribosomal subunit, although it is not seen to bind rRNA by itself. It is important during the early stages of 50S assembly. This is Large ribosomal subunit protein uL13 from Lawsonia intracellularis (strain PHE/MN1-00).